We begin with the raw amino-acid sequence, 477 residues long: Spliceosome-associated protein CWC27 homolog (477 aa).

Residues 11 to 166 form the PPIase cyclophilin-type domain; sequence SNGKVLLKTT…NPHKIKCTEV (156 aa). Disordered stretches follow at residues 203–355 and 401–477; these read LLSF…AENT and TQAI…KERR. Positions 208-218 are enriched in acidic residues; it reads EEAEEDEEEVN. 2 stretches are compositionally biased toward basic and acidic residues: residues 230-240 and 247-258; these read SSHDLLKDDPR and VEREKDSQSADS. Positions 259–279 are enriched in acidic residues; sequence DKDEDEMSDDDDEEEDDEMDS. Basic and acidic residues-rich tracts occupy residues 280–299, 311–353, and 430–442; these read DEKH…DPSK, EERK…KEAE, and QFEE…KDAN. A coiled-coil region spans residues 308–381; sequence DEAEERKSSR…EEVRKKNTNK (74 aa).

It belongs to the cyclophilin-type PPIase family. Part of the activated spliceosome B/catalytic step 1 spliceosome, one of the forms of the spliceosome which has a well-formed active site but still cannot catalyze the branching reaction and is composed at least of 52 proteins, the U2, U5 and U6 snRNAs and the pre-mRNA. Recruited during early steps of activated spliceosome B maturation, it is probably one of the first proteins released from this complex as he matures to the spliceosome C complex. Component of the minor spliceosome, which splices U12-type introns.

The protein resides in the nucleus. Functionally, as part of the spliceosome, plays a role in pre-mRNA splicing. Probable inactive PPIase with no peptidyl-prolyl cis-trans isomerase activity. The sequence is that of Spliceosome-associated protein CWC27 homolog (cwc27) from Xenopus laevis (African clawed frog).